The sequence spans 98 residues: NADH-ubiquinone oxidoreductase chain 4L (98 aa).

3 consecutive transmembrane segments (helical) span residues 1 to 21, 29 to 49, and 61 to 81; these read MSLTYMNMFMAFTISLLGLLM, SLLCLEGMMLSLFVMMTMTIL, and IILLVFAACEAALGLSLLVMV.

Belongs to the complex I subunit 4L family. Core subunit of respiratory chain NADH dehydrogenase (Complex I) which is composed of 45 different subunits.

Its subcellular location is the mitochondrion inner membrane. The catalysed reaction is a ubiquinone + NADH + 5 H(+)(in) = a ubiquinol + NAD(+) + 4 H(+)(out). In terms of biological role, core subunit of the mitochondrial membrane respiratory chain NADH dehydrogenase (Complex I) which catalyzes electron transfer from NADH through the respiratory chain, using ubiquinone as an electron acceptor. Part of the enzyme membrane arm which is embedded in the lipid bilayer and involved in proton translocation. This chain is NADH-ubiquinone oxidoreductase chain 4L (MT-ND4L), found in Vampyressa brocki (Brock's yellow-eared bat).